Reading from the N-terminus, the 221-residue chain is Superoxide dismutase [Mn] 1, mitochondrial (221 aa).

The transit peptide at 1-24 directs the protein to the mitochondrion; sequence MLQNTVRCVSKLVQPITGVAAVRS. Mn(2+)-binding residues include His50, His98, Asp182, and His186.

Belongs to the iron/manganese superoxide dismutase family. Homotetramer. Mn(2+) is required as a cofactor.

It localises to the mitochondrion matrix. It carries out the reaction 2 superoxide + 2 H(+) = H2O2 + O2. Its function is as follows. Destroys superoxide anion radicals which are normally produced within the cells and which are toxic to biological systems. This is Superoxide dismutase [Mn] 1, mitochondrial (sod-2) from Caenorhabditis elegans.